Here is a 333-residue protein sequence, read N- to C-terminus: Glycerol-3-phosphate dehydrogenase [NAD(P)+] (333 aa).

NADPH contacts are provided by serine 10, tryptophan 11, histidine 31, arginine 32, and lysine 105. The sn-glycerol 3-phosphate site is built by lysine 105, glycine 136, and serine 138. Alanine 140 serves as a coordination point for NADPH. Residues lysine 191, aspartate 244, serine 254, arginine 255, and asparagine 256 each coordinate sn-glycerol 3-phosphate. Lysine 191 (proton acceptor) is an active-site residue. Arginine 255 contacts NADPH. 2 residues coordinate NADPH: isoleucine 279 and glutamate 281.

The protein belongs to the NAD-dependent glycerol-3-phosphate dehydrogenase family.

It localises to the cytoplasm. It carries out the reaction sn-glycerol 3-phosphate + NAD(+) = dihydroxyacetone phosphate + NADH + H(+). It catalyses the reaction sn-glycerol 3-phosphate + NADP(+) = dihydroxyacetone phosphate + NADPH + H(+). It participates in membrane lipid metabolism; glycerophospholipid metabolism. Catalyzes the reduction of the glycolytic intermediate dihydroxyacetone phosphate (DHAP) to sn-glycerol 3-phosphate (G3P), the key precursor for phospholipid synthesis. The chain is Glycerol-3-phosphate dehydrogenase [NAD(P)+] from Chlorobium chlorochromatii (strain CaD3).